Here is a 315-residue protein sequence, read N- to C-terminus: Aspartate carbamoyltransferase catalytic subunit (315 aa).

Positions 55 and 56 each coordinate carbamoyl phosphate. Lys-83 is an L-aspartate binding site. Carbamoyl phosphate is bound by residues Arg-105, His-138, and Gln-141. Residues Arg-171 and Arg-225 each coordinate L-aspartate. Residues Gly-266 and Pro-267 each contribute to the carbamoyl phosphate site.

It belongs to the aspartate/ornithine carbamoyltransferase superfamily. ATCase family. In terms of assembly, heterododecamer (2C3:3R2) of six catalytic PyrB chains organized as two trimers (C3), and six regulatory PyrI chains organized as three dimers (R2).

The enzyme catalyses carbamoyl phosphate + L-aspartate = N-carbamoyl-L-aspartate + phosphate + H(+). Its pathway is pyrimidine metabolism; UMP biosynthesis via de novo pathway; (S)-dihydroorotate from bicarbonate: step 2/3. Catalyzes the condensation of carbamoyl phosphate and aspartate to form carbamoyl aspartate and inorganic phosphate, the committed step in the de novo pyrimidine nucleotide biosynthesis pathway. The chain is Aspartate carbamoyltransferase catalytic subunit from Mycolicibacterium gilvum (strain PYR-GCK) (Mycobacterium gilvum (strain PYR-GCK)).